A 315-amino-acid chain; its full sequence is Acetaldehyde dehydrogenase 2 (315 aa).

13–16 (SGNI) provides a ligand contact to NAD(+). Cys-131 functions as the Acyl-thioester intermediate in the catalytic mechanism. NAD(+) contacts are provided by residues 162-170 (SAGPGTRAN) and Asn-290.

The protein belongs to the acetaldehyde dehydrogenase family.

The catalysed reaction is acetaldehyde + NAD(+) + CoA = acetyl-CoA + NADH + H(+). In Pseudomonas putida (strain W619), this protein is Acetaldehyde dehydrogenase 2.